A 94-amino-acid chain; its full sequence is Large ribosomal subunit protein bL25 (94 aa).

The protein belongs to the bacterial ribosomal protein bL25 family. In terms of assembly, part of the 50S ribosomal subunit; part of the 5S rRNA/L5/L18/L25 subcomplex. Contacts the 5S rRNA. Binds to the 5S rRNA independently of L5 and L18.

Functionally, this is one of the proteins that binds to the 5S RNA in the ribosome where it forms part of the central protuberance. The polypeptide is Large ribosomal subunit protein bL25 (Shigella boydii serotype 18 (strain CDC 3083-94 / BS512)).